Here is a 508-residue protein sequence, read N- to C-terminus: Maturase K (508 aa).

This sequence belongs to the intron maturase 2 family. MatK subfamily.

Its subcellular location is the plastid. It is found in the chloroplast. Its function is as follows. Usually encoded in the trnK tRNA gene intron. Probably assists in splicing its own and other chloroplast group II introns. In Verbena rigida (Tuberous vervain), this protein is Maturase K.